Consider the following 422-residue polypeptide: Lipoyl synthase, mitochondrial (422 aa).

The N-terminal 34 residues, 1–34, are a transit peptide targeting the mitochondrion; it reads MAASSTRLRCLYASSAPAWKKSPSQSIISLSRHY. Over residues 37 to 48 the composition is skewed to polar residues; that stretch reads TSSTTPSLNPDE. The tract at residues 37–70 is disordered; it reads TSSTTPSLNPDESSSSSSSTIPKRRKTTTFRDKL. Cysteine 146, cysteine 151, cysteine 157, cysteine 177, cysteine 181, cysteine 184, and serine 383 together coordinate [4Fe-4S] cluster. The Radical SAM core domain maps to 160-372; it reads GSDKSAATAT…RQRALEMGFL (213 aa).

Belongs to the radical SAM superfamily. Lipoyl synthase family. It depends on [4Fe-4S] cluster as a cofactor.

It is found in the mitochondrion. It catalyses the reaction [[Fe-S] cluster scaffold protein carrying a second [4Fe-4S](2+) cluster] + N(6)-octanoyl-L-lysyl-[protein] + 2 oxidized [2Fe-2S]-[ferredoxin] + 2 S-adenosyl-L-methionine + 4 H(+) = [[Fe-S] cluster scaffold protein] + N(6)-[(R)-dihydrolipoyl]-L-lysyl-[protein] + 4 Fe(3+) + 2 hydrogen sulfide + 2 5'-deoxyadenosine + 2 L-methionine + 2 reduced [2Fe-2S]-[ferredoxin]. It participates in protein modification; protein lipoylation via endogenous pathway; protein N(6)-(lipoyl)lysine from octanoyl-[acyl-carrier-protein]: step 2/2. Its function is as follows. Catalyzes the radical-mediated insertion of two sulfur atoms into the C-6 and C-8 positions of the octanoyl moiety bound to the lipoyl domains of lipoate-dependent enzymes, thereby converting the octanoylated domains into lipoylated derivatives. This Talaromyces stipitatus (strain ATCC 10500 / CBS 375.48 / QM 6759 / NRRL 1006) (Penicillium stipitatum) protein is Lipoyl synthase, mitochondrial.